The following is a 442-amino-acid chain: U11/U12 small nuclear ribonucleoprotein 65 kDa protein (442 aa).

In terms of domain architecture, RRM 1 spans Val-28–Lys-102. Disordered stretches follow at residues Asn-101 to Ser-138, Leu-200 to Arg-242, and Ser-290 to Leu-317. Basic and acidic residues predominate over residues Lys-102 to Val-116. Over residues Thr-117–Ile-136 the composition is skewed to polar residues. Positions Leu-200–Lys-209 are enriched in pro residues. Residues Tyr-297–Ala-307 show a composition bias toward acidic residues. Residues Val-352–Thr-434 enclose the RRM 2 domain.

In terms of assembly, component of the U11/U12 snRNPs that are part of the U12-type spliceosome. Forms a complex with U12 snRNA. In terms of tissue distribution, ubiquitous.

It is found in the nucleus. Its function is as follows. Component of minor spliceosome required for U12-type intron splicing and alternative splicing of many introns. Binds specifically to U12 snRNA, which is necessary for branch-point site recognition. Required for normal plant development. The sequence is that of U11/U12 small nuclear ribonucleoprotein 65 kDa protein (SNRNP65) from Arabidopsis thaliana (Mouse-ear cress).